The sequence spans 449 residues: Exodeoxyribonuclease 7 large subunit (449 aa).

The protein belongs to the XseA family. As to quaternary structure, heterooligomer composed of large and small subunits.

The protein resides in the cytoplasm. It carries out the reaction Exonucleolytic cleavage in either 5'- to 3'- or 3'- to 5'-direction to yield nucleoside 5'-phosphates.. Functionally, bidirectionally degrades single-stranded DNA into large acid-insoluble oligonucleotides, which are then degraded further into small acid-soluble oligonucleotides. The protein is Exodeoxyribonuclease 7 large subunit of Aliivibrio fischeri (strain MJ11) (Vibrio fischeri).